Consider the following 234-residue polypeptide: NLP effector protein 10 (234 aa).

Residues 1-17 form the signal peptide; that stretch reads MFKTFIIAAVAVATVRA. N-linked (GlcNAc...) asparagine glycosylation is present at asparagine 65. Residues 101–111 carry the Conserved undecapeptide motif I motif; the sequence is AIMYSWYFPKD. The Hepta-peptide GHRHDWE motif II motif lies at 118-124; that stretch reads GHRHDWE.

Belongs to the Necrosis inducing protein (NPP1) family.

It localises to the secreted. Its function is as follows. Secreted effector that contributes moderately to virulence during infection by P.capsici. Does not cause visible reaction of C.annuum for several days after inoculation, but by 7 days after inoculation, small necrotic lesions become visible. Leads only to chlorotic areas, without necrosis at 7 days after non-host N.benthamiana leaves infection. The polypeptide is NLP effector protein 10 (Phytophthora capsici).